The following is a 307-amino-acid chain: 4-hydroxy-3-methylbut-2-enyl diphosphate reductase (307 aa).

[4Fe-4S] cluster is bound at residue Cys-13. 2 residues coordinate (2E)-4-hydroxy-3-methylbut-2-enyl diphosphate: His-42 and His-75. Residues His-42 and His-75 each contribute to the dimethylallyl diphosphate site. Residues His-42 and His-75 each contribute to the isopentenyl diphosphate site. Cys-97 serves as a coordination point for [4Fe-4S] cluster. (2E)-4-hydroxy-3-methylbut-2-enyl diphosphate is bound at residue His-125. His-125 is a binding site for dimethylallyl diphosphate. His-125 contacts isopentenyl diphosphate. The active-site Proton donor is the Glu-127. Thr-165 lines the (2E)-4-hydroxy-3-methylbut-2-enyl diphosphate pocket. Cys-195 is a [4Fe-4S] cluster binding site. Residues Ser-223, Ser-224, Asn-225, and Ser-267 each coordinate (2E)-4-hydroxy-3-methylbut-2-enyl diphosphate. Dimethylallyl diphosphate-binding residues include Ser-223, Ser-224, Asn-225, and Ser-267. Isopentenyl diphosphate is bound by residues Ser-223, Ser-224, Asn-225, and Ser-267.

The protein belongs to the IspH family. The cofactor is [4Fe-4S] cluster.

It catalyses the reaction isopentenyl diphosphate + 2 oxidized [2Fe-2S]-[ferredoxin] + H2O = (2E)-4-hydroxy-3-methylbut-2-enyl diphosphate + 2 reduced [2Fe-2S]-[ferredoxin] + 2 H(+). It carries out the reaction dimethylallyl diphosphate + 2 oxidized [2Fe-2S]-[ferredoxin] + H2O = (2E)-4-hydroxy-3-methylbut-2-enyl diphosphate + 2 reduced [2Fe-2S]-[ferredoxin] + 2 H(+). It participates in isoprenoid biosynthesis; dimethylallyl diphosphate biosynthesis; dimethylallyl diphosphate from (2E)-4-hydroxy-3-methylbutenyl diphosphate: step 1/1. It functions in the pathway isoprenoid biosynthesis; isopentenyl diphosphate biosynthesis via DXP pathway; isopentenyl diphosphate from 1-deoxy-D-xylulose 5-phosphate: step 6/6. Functionally, catalyzes the conversion of 1-hydroxy-2-methyl-2-(E)-butenyl 4-diphosphate (HMBPP) into a mixture of isopentenyl diphosphate (IPP) and dimethylallyl diphosphate (DMAPP). Acts in the terminal step of the DOXP/MEP pathway for isoprenoid precursor biosynthesis. The protein is 4-hydroxy-3-methylbut-2-enyl diphosphate reductase of Chlamydia trachomatis serovar L2 (strain ATCC VR-902B / DSM 19102 / 434/Bu).